Reading from the N-terminus, the 240-residue chain is Probable alpha-aspartyl dipeptidase (240 aa).

Active-site charge relay system residues include serine 125, aspartate 140, and histidine 162.

Belongs to the peptidase S51 family.

The protein resides in the cytoplasm. The catalysed reaction is Dipeptidase E catalyzes the hydrolysis of dipeptides Asp-|-Xaa. It does not act on peptides with N-terminal Glu, Asn or Gln, nor does it cleave isoaspartyl peptides.. Functionally, hydrolyzes dipeptides containing N-terminal aspartate residues. This Drosophila melanogaster (Fruit fly) protein is Probable alpha-aspartyl dipeptidase.